The primary structure comprises 464 residues: Chromosomal replication initiator protein DnaA (464 aa).

A domain I, interacts with DnaA modulators region spans residues Met1–Pro82. The tract at residues Pro82–Ser127 is domain II. The disordered stretch occupies residues Ala91–Pro118. A domain III, AAA+ region region spans residues Asn128 to Ala344. ATP is bound by residues Gly172, Gly174, Lys175, and Thr176. The tract at residues Asn345–Ser464 is domain IV, binds dsDNA.

Belongs to the DnaA family. Oligomerizes as a right-handed, spiral filament on DNA at oriC.

Its subcellular location is the cytoplasm. Functionally, plays an essential role in the initiation and regulation of chromosomal replication. ATP-DnaA binds to the origin of replication (oriC) to initiate formation of the DNA replication initiation complex once per cell cycle. Binds the DnaA box (a 9 base pair repeat at the origin) and separates the double-stranded (ds)DNA. Forms a right-handed helical filament on oriC DNA; dsDNA binds to the exterior of the filament while single-stranded (ss)DNA is stabiized in the filament's interior. The ATP-DnaA-oriC complex binds and stabilizes one strand of the AT-rich DNA unwinding element (DUE), permitting loading of DNA polymerase. After initiation quickly degrades to an ADP-DnaA complex that is not apt for DNA replication. Binds acidic phospholipids. The sequence is that of Chromosomal replication initiator protein DnaA from Sodalis glossinidius (strain morsitans).